Reading from the N-terminus, the 151-residue chain is S-ribosylhomocysteine lyase (151 aa).

Residues histidine 54, histidine 58, and cysteine 121 each contribute to the Fe cation site.

Belongs to the LuxS family. As to quaternary structure, homodimer. Fe cation is required as a cofactor.

It carries out the reaction S-(5-deoxy-D-ribos-5-yl)-L-homocysteine = (S)-4,5-dihydroxypentane-2,3-dione + L-homocysteine. Its function is as follows. Involved in the synthesis of autoinducer 2 (AI-2) which is secreted by bacteria and is used to communicate both the cell density and the metabolic potential of the environment. The regulation of gene expression in response to changes in cell density is called quorum sensing. Catalyzes the transformation of S-ribosylhomocysteine (RHC) to homocysteine (HC) and 4,5-dihydroxy-2,3-pentadione (DPD). The sequence is that of S-ribosylhomocysteine lyase from Clostridioides difficile (strain 630) (Peptoclostridium difficile).